We begin with the raw amino-acid sequence, 233 residues long: tRNA (guanine-N(7)-)-methyltransferase (233 aa).

Positions 62, 87, 114, and 136 each coordinate S-adenosyl-L-methionine. Asp136 is an active-site residue. Substrate contacts are provided by residues Lys140, Asp172, and 211-214 (TRYE).

Belongs to the class I-like SAM-binding methyltransferase superfamily. TrmB family.

It catalyses the reaction guanosine(46) in tRNA + S-adenosyl-L-methionine = N(7)-methylguanosine(46) in tRNA + S-adenosyl-L-homocysteine. The protein operates within tRNA modification; N(7)-methylguanine-tRNA biosynthesis. Functionally, catalyzes the formation of N(7)-methylguanine at position 46 (m7G46) in tRNA. This Erythrobacter litoralis (strain HTCC2594) protein is tRNA (guanine-N(7)-)-methyltransferase.